Consider the following 145-residue polypeptide: Cuticle protein 65 (145 aa).

Tandem repeats lie at residues 27-30 (AAPA), 33-37 (AAPAV), 39-42 (AAPA), 86-89 (AAPV), 92-95 (AAPA), 98-101 (AAPA), and 123-126 (AAPA).

Functionally, component of the cuticle of migratory locust which contains more than 100 different structural proteins. The chain is Cuticle protein 65 from Locusta migratoria (Migratory locust).